Consider the following 233-residue polypeptide: Pre-hexon-linking protein VIII (233 aa).

At Thr64 the chain carries Phosphothreonine; by host. A propeptide spanning residues 112 to 163 (ARHSFRYKGRTEPYPSPAIKRVLIRGKGIQLNDEVTSPLGVRPDGVFQLGGS) is cleaved from the precursor. Residue Ser180 is modified to Phosphoserine; by host.

It belongs to the adenoviridae hexon-linking protein family. In terms of assembly, interacts with the peripentonal hexons as well as the hexons in the facets. Part of a complex composed of the core-capsid bridging protein, the endosome lysis protein VI and the hexon-linking protein VIII; these interactions bridge the virus core to the capsid. In terms of processing, cleaved by the viral protease during virion maturation. May cause the middle segment to be shed from the capsid.

It is found in the virion. The protein localises to the host nucleus. In terms of biological role, structural component of the virion that acts as a cement protein on the capsid interior and which glue the peripentonal hexons and group-of-nine hexons together. In Homo sapiens (Human), this protein is Pre-hexon-linking protein VIII.